The sequence spans 78 residues: uncharacterized protein (78 aa).

This is an uncharacterized protein from Dictyostelium discoideum (Social amoeba).